The sequence spans 131 residues: Translation initiation factor 5A (131 aa).

K37 carries the hypusine modification.

Belongs to the eIF-5A family.

It localises to the cytoplasm. Functionally, functions by promoting the formation of the first peptide bond. The protein is Translation initiation factor 5A (eIF5A) of Methanococcus maripaludis (strain C7 / ATCC BAA-1331).